Reading from the N-terminus, the 553-residue chain is HTH-type transcriptional regulator SgrR (553 aa).

The HTH marR-type domain occupies 1-117 (MSTARLQQQF…LSQLGRSFRQ (117 aa)). A DNA-binding region (H-T-H motif) is located at residues 26–49 (LQELAEVLCCSRRHVRSLLGSMQQ). Positions 163–494 (ELEPDLSHHW…EELHQDVELW (332 aa)) are solute-binding.

Functionally, activates the small RNA gene sgrS under glucose-phosphate stress conditions as well as yfdZ. Represses its own transcription under both stress and non-stress conditions. Might act as a sensor of the intracellular accumulation of phosphoglucose by binding these molecules in its C-terminal solute-binding domain. The sequence is that of HTH-type transcriptional regulator SgrR from Yersinia enterocolitica serotype O:8 / biotype 1B (strain NCTC 13174 / 8081).